Consider the following 362-residue polypeptide: Spermidine/putrescine import ATP-binding protein PotA (362 aa).

The region spanning Ile4–Ile235 is the ABC transporter domain. Residue Gly37–Thr44 participates in ATP binding.

The protein belongs to the ABC transporter superfamily. Spermidine/putrescine importer (TC 3.A.1.11.1) family. In terms of assembly, the complex is composed of two ATP-binding proteins (PotA), two transmembrane proteins (PotB and PotC) and a solute-binding protein (PotD).

Its subcellular location is the cell membrane. The catalysed reaction is ATP + H2O + polyamine-[polyamine-binding protein]Side 1 = ADP + phosphate + polyamineSide 2 + [polyamine-binding protein]Side 1.. In terms of biological role, part of the ABC transporter complex PotABCD involved in spermidine/putrescine import. Responsible for energy coupling to the transport system. The polypeptide is Spermidine/putrescine import ATP-binding protein PotA (Lactobacillus delbrueckii subsp. bulgaricus (strain ATCC 11842 / DSM 20081 / BCRC 10696 / JCM 1002 / NBRC 13953 / NCIMB 11778 / NCTC 12712 / WDCM 00102 / Lb 14)).